The chain runs to 165 residues: uncharacterized protein (165 aa).

A helical membrane pass occupies residues 7–29; that stretch reads YPLIFTAFLLIAFCLIFFSYHLI.

The protein resides in the membrane. This is an uncharacterized protein from Bacillus subtilis (strain 168).